A 307-amino-acid chain; its full sequence is Thiosulfate dehydrogenase (307 aa).

Positions 1-20 (MNTQLLVTLLAMSIGGVALA) are cleaved as a signal peptide. 2 consecutive Cytochrome c domains span residues 59–156 (ELVQ…YWLS) and 180–265 (FDIA…NSHE). Heme c is bound by residues Cys85, Cys88, His89, Cys193, Cys196, and His197.

Monomer. Post-translationally, binds 2 heme c groups covalently per subunit.

Its subcellular location is the periplasm. It catalyses the reaction 2 thiosulfate + 2 Fe(III)-[cytochrome c] = tetrathionate + 2 Fe(II)-[cytochrome c] + 2 H(+). Catalyzes the oxidation of 2 molecules of thiosulfate to tetrathionate, using TsdB as an electron acceptor. This is Thiosulfate dehydrogenase (tsdA) from Stutzerimonas stutzeri (strain A1501) (Pseudomonas stutzeri).